The chain runs to 654 residues: Tetratricopeptide repeat protein 30 homolog (654 aa).

TPR repeat units lie at residues 10–43, 44–76, 143–176, 178–210, 384–417, 449–483, and 533–566; these read EGHV…ANTR, AGLS…APKE, ADTL…GGFN, LVAY…GVRN, LAAK…YLPV, AVWR…HSDD, and CIVN…GAGG.

This sequence belongs to the TTC30/dfy-1/fleer family.

It localises to the cell projection. It is found in the cilium. In terms of biological role, required for polyglutamylation of axonemal tubulin in sensory cilia. Plays a role in anterograde intraflagellar transport (IFT), the process by which cilia precursors are transported from the base of the cilium to the site of their incorporation at the tip. In Drosophila pseudoobscura pseudoobscura (Fruit fly), this protein is Tetratricopeptide repeat protein 30 homolog.